The chain runs to 316 residues: N-acetylmuramic acid 6-phosphate etherase (316 aa).

The interval 1–25 is disordered; it reads MAVFDPDLQPSSDRGHLLTEQSNQR. Positions 66–229 constitute an SIS domain; sequence VANRLRAGGR…STAVMVKLGK (164 aa). Glu-94 serves as the catalytic Proton donor. Glu-125 is a catalytic residue.

This sequence belongs to the GCKR-like family. MurNAc-6-P etherase subfamily. Homodimer.

The catalysed reaction is N-acetyl-D-muramate 6-phosphate + H2O = N-acetyl-D-glucosamine 6-phosphate + (R)-lactate. Its pathway is amino-sugar metabolism; N-acetylmuramate degradation. Functionally, specifically catalyzes the cleavage of the D-lactyl ether substituent of MurNAc 6-phosphate, producing GlcNAc 6-phosphate and D-lactate. The sequence is that of N-acetylmuramic acid 6-phosphate etherase from Synechococcus sp. (strain CC9605).